We begin with the raw amino-acid sequence, 582 residues long: Protein bps2 (582 aa).

28-35 (APNAYGKT) provides a ligand contact to ATP. A coiled-coil region spans residues 243-281 (RQSYERQLQEINAQLQKITAQRNEAEIEIRLLEKVLDQI). The region spanning 243–351 (RQSYERQLQE…KLKELDQISS (109 aa)) is the Zinc-hook domain. The Zn(2+) site is built by cysteine 292 and cysteine 295. The stretch at 320 to 351 (SLYAGIKKEADELLSKKSEIEKKLKELDQISS) forms a coiled coil.

This Acidianus ambivalens (Desulfurolobus ambivalens) protein is Protein bps2 (bps2).